The following is a 277-amino-acid chain: Thymidylate synthase (277 aa).

R21 is a binding site for dUMP. H51 lines the (6R)-5,10-methylene-5,6,7,8-tetrahydrofolate pocket. 126-127 (RR) is a binding site for dUMP. Catalysis depends on C159, which acts as the Nucleophile. DUMP contacts are provided by residues 179-182 (RSAD), N190, and 220-222 (HLY). D182 serves as a coordination point for (6R)-5,10-methylene-5,6,7,8-tetrahydrofolate. S276 is a (6R)-5,10-methylene-5,6,7,8-tetrahydrofolate binding site.

This sequence belongs to the thymidylate synthase family. Bacterial-type ThyA subfamily. Homodimer.

It localises to the cytoplasm. It carries out the reaction dUMP + (6R)-5,10-methylene-5,6,7,8-tetrahydrofolate = 7,8-dihydrofolate + dTMP. The protein operates within pyrimidine metabolism; dTTP biosynthesis. Catalyzes the reductive methylation of 2'-deoxyuridine-5'-monophosphate (dUMP) to 2'-deoxythymidine-5'-monophosphate (dTMP) while utilizing 5,10-methylenetetrahydrofolate (mTHF) as the methyl donor and reductant in the reaction, yielding dihydrofolate (DHF) as a by-product. This enzymatic reaction provides an intracellular de novo source of dTMP, an essential precursor for DNA biosynthesis. The protein is Thymidylate synthase of Saccharophagus degradans (strain 2-40 / ATCC 43961 / DSM 17024).